Consider the following 213-residue polypeptide: Eukaryotic translation initiation factor isoform 4E (213 aa).

A disordered region spans residues 1–37; the sequence is MATEVAAAVPPPQLDAEENSGLEAAAAEAKIQPSSGP. Residues 56-61, lysine 88, and 106-107 each bind mRNA; these read QGAAWG and WE. The cysteines at positions 111 and 150 are disulfide-linked. Residues 157-162 and 202-205 each bind mRNA; these read RQRQDK and KRER.

Belongs to the eukaryotic initiation factor 4E family. As to quaternary structure, EIF4F is a multi-subunit complex, the composition of which varies with external and internal environmental conditions. It is composed of at least EIF4A, EIF4E and EIF4G. EIF4E is also known to interact with other partners. In higher plants two isoforms of EIF4F have been identified, named isoform EIF4F and isoform EIF(iso)4F. Isoform EIF4F has subunits p220 and p26, whereas isoform EIF(iso)4F has subunits p82 and p28. (Microbial infection) Interacts with potyvirus viral genome-linked protein (VPg) of plum pox virus (PPV) strain D both in nucleus and cytoplasm; this interaction is possible in susceptible hosts but is impaired in resistant plants. Post-translationally, according to the redox status, the Cys-111-Cys-150 disulfide bridge may have a role in regulating protein function by affecting its ability to bind capped mRNA. In terms of tissue distribution, mostly expressed in leaves, flower buds, leaf buds and anthers, to a lower extent in roots, stems and green immature fruit, and, at low levels, in petals.

Its subcellular location is the cytoplasm. The protein resides in the nucleus. Its function is as follows. Component of the protein complex eIF4F, which is involved in the recognition of the mRNA cap, ATP-dependent unwinding of 5'-terminal secondary structure and recruitment of mRNA to the ribosome. Recognizes and binds the 7-methylguanosine-containing mRNA cap during an early step in the initiation of protein synthesis and facilitates ribosome binding by inducing the unwinding of the mRNAs secondary structures. Key component of recessive resistance to potyviruses such as the plum pox virus (PPV) strain D. Functionally, (Microbial infection) Susceptibility host factor required for viral infection by recruiting viral RNAs to the host ribosomal complex via an interaction with viral genome-linked protein (VPg). In Prunus domestica (Garden plum), this protein is Eukaryotic translation initiation factor isoform 4E.